The following is a 1052-amino-acid chain: Ubiquitin-like modifier-activating enzyme 6 (1052 aa).

Met-1 is subject to N-acetylmethionine. Residues 1–21 are disordered; sequence MEGSEPVAAHQGEEASCSSWG. Residue Arg-46 coordinates ATP. Thr-54 carries the phosphothreonine modification. Ser-301 carries the post-translational modification Phosphoserine. Residues Ala-470 and Asp-497 each contribute to the ATP site. The Mg(2+) site is built by Asp-499 and Glu-502. ATP-binding residues include Asn-505, Arg-508, Gln-509, and Lys-521. N6-acetyllysine is present on Lys-544. Val-545 contacts ATP. Residue Asp-569 coordinates Mg(2+). Asn-570 is a binding site for ATP. Catalysis depends on Cys-625, which acts as the Glycyl thioester intermediate. Lys-729 is modified (N6-acetyllysine). Ser-737 is modified (phosphoserine).

This sequence belongs to the ubiquitin-activating E1 family. In terms of assembly, forms a thioester with UBD in cells stimulated with tumor necrosis factor-alpha (TNFa) and interferon-gamma (IFNg). Widely expressed. Isoform 2 is predominantly expressed in testis with higher expression in adult testis than in fetal testis.

The catalysed reaction is ATP + ubiquitin + [E1 ubiquitin-activating enzyme]-L-cysteine = AMP + diphosphate + S-ubiquitinyl-[E1 ubiquitin-activating enzyme]-L-cysteine.. Its pathway is protein modification; protein ubiquitination. Activates ubiquitin by first adenylating its C-terminal glycine residue with ATP, and thereafter linking this residue to the side chain of a cysteine residue in E1, yielding a ubiquitin-E1 thioester and free AMP. Specific for ubiquitin, does not activate ubiquitin-like peptides. Also activates UBD/FAT10 conjugation via adenylation of its C-terminal glycine. Differs from UBE1 in its specificity for substrate E2 charging. Does not charge cell cycle E2s, such as CDC34. Essential for embryonic development. Isoform 2 may play a key role in ubiquitin system and may influence spermatogenesis and male fertility. This chain is Ubiquitin-like modifier-activating enzyme 6 (UBA6), found in Homo sapiens (Human).